The chain runs to 210 residues: Casparian strip membrane protein 4 (210 aa).

Over Met1 to Gly48 the chain is Cytoplasmic. The chain crosses the membrane as a helical span at residues Val49 to Ala69. Over Thr70–Gln98 the chain is Extracellular. A helical membrane pass occupies residues Phe99–Ile119. The Cytoplasmic portion of the chain corresponds to Val120–Arg131. The chain crosses the membrane as a helical span at residues Leu132–Ala152. Over Thr153–Gly184 the chain is Extracellular. Residues Ala185–Val205 traverse the membrane as a helical segment. The Cytoplasmic portion of the chain corresponds to Ala206 to His210.

This sequence belongs to the Casparian strip membrane proteins (CASP) family. Homodimer and heterodimers.

It is found in the cell membrane. Regulates membrane-cell wall junctions and localized cell wall deposition. Required for establishment of the Casparian strip membrane domain (CSD) and the subsequent formation of Casparian strips, a cell wall modification of the root endodermis that determines an apoplastic barrier between the intraorganismal apoplasm and the extraorganismal apoplasm and prevents lateral diffusion. This is Casparian strip membrane protein 4 from Glycine max (Soybean).